Consider the following 315-residue polypeptide: Putative glycosyltransferase ORF315 (315 aa).

This sequence belongs to the glycosyltransferase group 1 family. Glycosyltransferase 4 subfamily.

The chain is Putative glycosyltransferase ORF315 from Acidianus convivator (ABV).